Reading from the N-terminus, the 221-residue chain is Eukaryotic translation initiation factor 4E-2 (221 aa).

Residues Met-1–Asp-20 are compositionally biased toward basic and acidic residues. Residues Met-1–Ser-36 form a disordered region. Acidic residues predominate over residues Arg-21 to Asp-33. 2 EIF4G-binding regions span residues His-46–Glu-49 and Phe-56–His-92. Residues Lys-64–Gly-69, Lys-96, and Trp-114–Glu-115 each bind mRNA. Residues Cys-119 and Cys-157 are joined by a disulfide bond. Positions Tyr-140 to Gln-149 are EIF4G-binding. MRNA contacts are provided by residues Arg-164 to Lys-169 and Lys-209 to Arg-213.

Belongs to the eukaryotic initiation factor 4E family. As to quaternary structure, EIF4F is a multi-subunit complex, the composition of which varies with external and internal environmental conditions. It is composed of at least EIF4A, EIF4E and EIF4G. EIF4E is also known to interact with other partners. In higher plants two isoforms of EIF4F have been identified, named isoform EIF4F and isoform EIF(iso)4F. Isoform EIF4F has subunits p220 and p26, whereas isoform EIF(iso)4F has subunits p82 and p28. In terms of assembly, (Microbial infection) Interacts with potyvirus viral genome-linked protein (VPg) in the nucleus; mostly potato virus Y (PVY-LYE84) and tobacco etch virus (TEV-HAT) VPg, but not with PVY-LYE90 and pepper mottle virus (PepMoV) VPg; these interactions are possible in susceptible hosts but impaired in resistant plants. According to the redox status, the Cys-119-Cys-157 disulfide bridge may have a role in regulating protein function by affecting its ability to bind capped mRNA.

It localises to the nucleus. The protein resides in the cytoplasm. Functionally, component of the protein complex eIF4F, which is involved in the recognition of the mRNA cap, ATP-dependent unwinding of 5'-terminal secondary structure and recruitment of mRNA to the ribosome. Recognizes and binds the 7-methylguanosine-containing mRNA cap during an early step in the initiation of protein synthesis and facilitates ribosome binding by inducing the unwinding of the mRNAs secondary structures. Key component of recessive resistance to potyviruses. In terms of biological role, (Microbial infection) Susceptibility host factor required for viral infection (e.g. potato virus Y (PVY) and tobacco etch virus (TEV)) by recruiting viral RNAs to the host ribosomal complex via an interaction with viral genome-linked protein (VPg). The protein is Eukaryotic translation initiation factor 4E-2 of Solanum lycopersicum (Tomato).